We begin with the raw amino-acid sequence, 369 residues long: Choline-phosphate cytidylyltransferase B (369 aa).

A disordered region spans residues 1 to 27 (MPVVTTDAESETGIPKSLSNEPPSETM). CTP contacts are provided by Ile84, Phe85, His92, and Lys122. Positions 122 and 151 each coordinate phosphocholine. His168, Asp169, Tyr173, Gln195, Arg196, Thr197, and Ile200 together coordinate CTP. The interval 309 to 369 (RMLQALSPKQ…SMSEGDEDEK (61 aa)) is disordered. 7 positions are modified to phosphoserine: Ser315, Ser319, Ser322, Ser323, Ser329, Ser331, and Ser335. Low complexity predominate over residues 319-339 (SPVSSPTRSRSPSRSPSPTFS). At Thr345 the chain carries Phosphothreonine. Residues Ser346, Ser349, Ser350, Ser355, Ser360, and Ser362 each carry the phosphoserine modification. The span at 351–362 (PKAASASISSMS) shows a compositional bias: low complexity.

This sequence belongs to the cytidylyltransferase family. As to quaternary structure, homodimer. Post-translationally, phosphorylated. In terms of processing, extensively phosphorylated. Highly expressed in testis, placenta, brain, ovary, liver and fetal lung. In terms of tissue distribution, expressed in brain, liver and fetal lung.

The protein localises to the cytoplasm. It is found in the endoplasmic reticulum. It catalyses the reaction phosphocholine + CTP + H(+) = CDP-choline + diphosphate. The protein operates within phospholipid metabolism; phosphatidylcholine biosynthesis; phosphatidylcholine from phosphocholine: step 1/2. Catalyzes the key rate-limiting step in the CDP-choline pathway for phosphatidylcholine biosynthesis. The sequence is that of Choline-phosphate cytidylyltransferase B (PCYT1B) from Homo sapiens (Human).